The following is a 517-amino-acid chain: Squalene epoxidase 6 (517 aa).

A run of 2 helical transmembrane segments spans residues 3-23 (FTHV…VFYL) and 45-65 (AADV…YALA). FAD-binding positions include 55–56 (VG), 75–76 (ER), Arg83, Phe88, Arg156, Val172, Asp336, and Met349. The helical transmembrane segment at 447-467 (LVYHLCAITLSSIGQLLSPFP) threads the bilayer.

It belongs to the squalene monooxygenase family. FAD is required as a cofactor. As to expression, expressed in seedlings, leaves, stems, inflorescences and siliques.

The protein localises to the membrane. It carries out the reaction squalene + reduced [NADPH--hemoprotein reductase] + O2 = (S)-2,3-epoxysqualene + oxidized [NADPH--hemoprotein reductase] + H2O + H(+). Its pathway is terpene metabolism; lanosterol biosynthesis; lanosterol from farnesyl diphosphate: step 2/3. Catalyzes the stereospecific oxidation of squalene to (S)-2,3-epoxysqualene, and is considered to be a rate-limiting enzyme in steroid biosynthesis. This is Squalene epoxidase 6 (SQE6) from Arabidopsis thaliana (Mouse-ear cress).